A 34-amino-acid polypeptide reads, in one-letter code: Dermaseptin-S2 (34 aa).

This sequence belongs to the frog skin active peptide (FSAP) family. Dermaseptin subfamily. As to expression, expressed by the skin glands.

The protein localises to the secreted. Potent antimicrobial peptide with activity against bacteria and protozoa. Also has activity against fungi. Probably acts by disturbing membrane functions with its amphipathic structure. This is Dermaseptin-S2 from Phyllomedusa sauvagei (Sauvage's leaf frog).